The primary structure comprises 434 residues: Glutamate-1-semialdehyde 2,1-aminomutase (434 aa).

The residue at position 271 (K271) is an N6-(pyridoxal phosphate)lysine.

Belongs to the class-III pyridoxal-phosphate-dependent aminotransferase family. HemL subfamily. In terms of assembly, homodimer. The cofactor is pyridoxal 5'-phosphate.

It is found in the cytoplasm. It carries out the reaction (S)-4-amino-5-oxopentanoate = 5-aminolevulinate. It participates in porphyrin-containing compound metabolism; protoporphyrin-IX biosynthesis; 5-aminolevulinate from L-glutamyl-tRNA(Glu): step 2/2. It functions in the pathway porphyrin-containing compound metabolism; chlorophyll biosynthesis. The sequence is that of Glutamate-1-semialdehyde 2,1-aminomutase from Prochlorococcus marinus (strain MIT 9312).